A 178-amino-acid chain; its full sequence is MINTQTLARPYAKAAFEFASAAGQTDSWSKMLNLAAVAVEVPEVAALLNDPRLTSESKVQALVRVLGDDADEAFRNYVQTLGENDRLSVLPTVWELYEDIKAQAEKTLEAEVETAFELSNAQLQTLAAALSKRLDRTVNLQQVVNPALIGGVLIRAGDVVVDGSVRGKLSQLAESLKS.

This sequence belongs to the ATPase delta chain family. As to quaternary structure, F-type ATPases have 2 components, F(1) - the catalytic core - and F(0) - the membrane proton channel. F(1) has five subunits: alpha(3), beta(3), gamma(1), delta(1), epsilon(1). F(0) has three main subunits: a(1), b(2) and c(10-14). The alpha and beta chains form an alternating ring which encloses part of the gamma chain. F(1) is attached to F(0) by a central stalk formed by the gamma and epsilon chains, while a peripheral stalk is formed by the delta and b chains.

It is found in the cell inner membrane. F(1)F(0) ATP synthase produces ATP from ADP in the presence of a proton or sodium gradient. F-type ATPases consist of two structural domains, F(1) containing the extramembraneous catalytic core and F(0) containing the membrane proton channel, linked together by a central stalk and a peripheral stalk. During catalysis, ATP synthesis in the catalytic domain of F(1) is coupled via a rotary mechanism of the central stalk subunits to proton translocation. Functionally, this protein is part of the stalk that links CF(0) to CF(1). It either transmits conformational changes from CF(0) to CF(1) or is implicated in proton conduction. The sequence is that of ATP synthase subunit delta from Stutzerimonas stutzeri (strain A1501) (Pseudomonas stutzeri).